The following is a 118-amino-acid chain: Large ribosomal subunit protein bL20 (118 aa).

It belongs to the bacterial ribosomal protein bL20 family.

In terms of biological role, binds directly to 23S ribosomal RNA and is necessary for the in vitro assembly process of the 50S ribosomal subunit. It is not involved in the protein synthesizing functions of that subunit. This is Large ribosomal subunit protein bL20 from Pseudomonas fluorescens (strain SBW25).